A 928-amino-acid chain; its full sequence is Receptor-like kinase TMK4 (928 aa).

An N-terminal signal peptide occupies residues 1 to 24 (MEAPTPLLLLVLLTTITFFTTSVA). Topologically, residues 25 to 472 (DDQTAMLALA…GGSSGGGGSK (448 aa)) are extracellular. Cysteines 51 and 58 form a disulfide. LRR repeat units follow at residues 61-84 (GRVTTISLADKSLTGFIAPEISTL), 85-107 (SELKSVSIQRNKLSGTIPSFAKL), 108-130 (SSLQEIYMDENNFVGVETGAFAG), 132-157 (TSLQILSLSDNNNITTWSFPSELVDS), 158-180 (TSLTTIYLDNTNIAGVLPDIFDS), 181-205 (LASLQNLRLSYNNITGVLPPSLGKS), 207-229 (IQNLWINNQDLGMSGTIEVLSSM), 230-251 (TSLSQAWLHKNHFFGPIPDLSK), 252-276 (SENLFDLQLRDNDLTGIVPPTLLTL), and 278-298 (SLKNISLDNNKFQGPLPLFSP). The N-linked (GlcNAc...) asparagine glycan is linked to N144. The N-linked (GlcNAc...) asparagine glycan is linked to N193. N281 carries an N-linked (GlcNAc...) asparagine glycan. 2 cysteine pairs are disulfide-bonded: C310–C318 and C348–C356. LRR repeat units follow at residues 360-383 (GKNVVTLNLGKHGFTGFISPAIAN), 384-407 (LTSLKSLYLNGNDLTGVIPKELTF), and 408-435 (MTSLQLIDVSNNNLRGEIPKFPATVKFS). The N-linked (GlcNAc...) asparagine glycan is linked to N383. A disordered region spans residues 445-465 (TNGGDGSSPGTGGASGGPGGS). A helical transmembrane segment spans residues 473-493 (VGVIVGVIVAVLVFLAILGFV). Residues 494-928 (VYKFVMKRKY…PNTFDSADGR (435 aa)) are Cytoplasmic-facing. The Protein kinase domain occupies 578–858 (FSEDNILGRG…HAVNVLGPLV (281 aa)). ATP contacts are provided by residues 584-592 (LGRGGFGVV) and K606. The active-site Proton acceptor is D707. 2 stretches are compositionally biased toward polar residues: residues 898–911 (FHGDFSYSQTQSSI) and 918–928 (FPNTFDSADGR). A disordered region spans residues 898 to 928 (FHGDFSYSQTQSSIPPKASGFPNTFDSADGR).

It belongs to the protein kinase superfamily. Ser/Thr protein kinase family. Interacts with BAK1 (via kinase domain), SERK4 and SERK5. As to expression, expressed in roots, leaves, stems, siliques and flowers. Ubiquitous, with a high expression in mature pollen grains and in the pericycle and the xylem vasculature of the primary and lateral roots.

The protein resides in the membrane. The enzyme catalyses L-seryl-[protein] + ATP = O-phospho-L-seryl-[protein] + ADP + H(+). The catalysed reaction is L-threonyl-[protein] + ATP = O-phospho-L-threonyl-[protein] + ADP + H(+). Its function is as follows. Involved in auxin signal transduction and cell expansion and proliferation regulation. May be involved in brassinosteroid-mediated plant growth and development via auxin regulation. May be involved in microspore and pollen development. The sequence is that of Receptor-like kinase TMK4 from Arabidopsis thaliana (Mouse-ear cress).